Consider the following 522-residue polypeptide: Non-structural maintenance of chromosome element 6 (522 aa).

Over residues 482 to 492 (KQKDRYFKDKT) the composition is skewed to basic and acidic residues. The segment at 482 to 522 (KQKDRYFKDKTSNLSMKENKSFSAKKVKKGKKKNKRQAYKR) is disordered. The span at 504-522 (SAKKVKKGKKKNKRQAYKR) shows a compositional bias: basic residues.

In terms of assembly, component of the smc5/smc6 complex which consists of two subcomplexes, smc5-smc6-nse2 and nse1-nse2-nse4. Interacts with nse5.

Its subcellular location is the nucleus. The protein localises to the chromosome. Functionally, acts in a DNA repair pathway for removal of UV-induced DNA damage that is distinct from classical nucleotide excision repair and in repair of ionizing radiation damage. Functions in homologous recombination repair of DNA double strand breaks and in recovery of stalled replication forks. May prevent formation of excessive Holliday junctions or assist in their resolution. In Schizosaccharomyces pombe (strain 972 / ATCC 24843) (Fission yeast), this protein is Non-structural maintenance of chromosome element 6 (nse6).